The chain runs to 439 residues: MDQLAHLYHAHMAELNRRVGEICQRENLSGLVIHSGQPHRQFLDDLNYPFKVNPQFKAWLPILDTPNCWVIANGQDKPTLVFYRPVDFWHKVNDVPQAFWTEHFDIQLLTKPDRIADFLPKDLASWAYIGEHLDVADVLGFAARNPDAVMNYLHYHRADKTQYELECMRRANQIAVKGHLAAKNAFYDGASEFEIQQRYLLEIGQGENEVPYGNIVALNQNAAILHYTALEHVKPAQRLSFLIDAGASYHGYAADITRTYSFEKNRFYELIVALDKVQLAIIEQMKPGVKYVDLHIATHHYIGQLLIDFGLANGTAEQLVAQGVTSAFFPHGLGHMLGLQVHDMGGYSHDERGTHIAAPEAHPFLRCTRVLAANQVLTIEPGLYIIDTLLNQLSATAKQAINWTTVDEMRPFGGIRIEDNVIVHQDRVENMTREFGLVD.

Mn(2+)-binding residues include Asp244, Asp255, His335, Glu380, and Glu418.

The protein belongs to the peptidase M24B family. Bacterial-type prolidase subfamily. It depends on Mn(2+) as a cofactor.

It carries out the reaction Xaa-L-Pro dipeptide + H2O = an L-alpha-amino acid + L-proline. Its function is as follows. Splits dipeptides with a prolyl residue in the C-terminal position. The sequence is that of Xaa-Pro dipeptidase from Shewanella frigidimarina (strain NCIMB 400).